The primary structure comprises 344 residues: MSLRIGVIGTGAIGKEHINRITNKLSGAEIVAVTDVNQEAAQKVVEQYQLNATVYPNDDSLLADENVDAVLVTSWGPAHESSVLKAIKAQKYVFCEKPLATTAEGCMRIVEEEIKVGKRLVQVGFMRRYDSGYVQLKEALDNHVIGEPLMIHCAHRNPTVGDNYTTDMAVVDTLVHEIDVLHWLVNDDYESVQVIYPKKSKNALPHLKDPQIVVIETKGGIVINAEIYVNCKYGYDIQCEIVGEDGIIKLPEPSSISLRKEGRFSTDILMDWQRRFVAAYDVEIQDFIDSIQKKGEVSGPTAWDGYIAAVTTDACVKAQESGQKEKVELKEKPEFYQSFTTVQN.

Belongs to the Gfo/Idh/MocA family. Homotetramer.

It catalyses the reaction myo-inositol + NAD(+) = scyllo-inosose + NADH + H(+). The enzyme catalyses 1D-chiro-inositol + NAD(+) = scyllo-inosine + NADH + H(+). Its pathway is polyol metabolism; myo-inositol degradation into acetyl-CoA; acetyl-CoA from myo-inositol: step 1/7. In terms of biological role, involved in the oxidation of myo-inositol (MI) and D-chiro-inositol (DCI) to 2-keto-myo-inositol (2KMI or 2-inosose) and 1-keto-D-chiro-inositol (1KDCI), respectively. Can also use D-glucose and D-xylose, and shows a trace of activity with D-ribose and D-fructose. The protein is Inositol 2-dehydrogenase/D-chiro-inositol 3-dehydrogenase (iolG) of Bacillus subtilis (strain 168).